Consider the following 213-residue polypeptide: GTP cyclohydrolase 1 (213 aa).

Cys104, His107, and Cys175 together coordinate Zn(2+).

The protein belongs to the GTP cyclohydrolase I family. Toroid-shaped homodecamer, composed of two pentamers of five dimers.

It catalyses the reaction GTP + H2O = 7,8-dihydroneopterin 3'-triphosphate + formate + H(+). The protein operates within cofactor biosynthesis; 7,8-dihydroneopterin triphosphate biosynthesis; 7,8-dihydroneopterin triphosphate from GTP: step 1/1. The chain is GTP cyclohydrolase 1 from Brucella anthropi (strain ATCC 49188 / DSM 6882 / CCUG 24695 / JCM 21032 / LMG 3331 / NBRC 15819 / NCTC 12168 / Alc 37) (Ochrobactrum anthropi).